Consider the following 67-residue polypeptide: Large ribosomal subunit protein bL35 (67 aa).

The protein belongs to the bacterial ribosomal protein bL35 family.

In Acidiphilium cryptum (strain JF-5), this protein is Large ribosomal subunit protein bL35.